The chain runs to 520 residues: MFIAAVTHNWMERLAALSLLHYVLGAIFLLLLFHMLSNFFHPGLVDVPGPFAAKFTDLWRLFKVWQRRFKEDLPGLHASHRSTLIRIGPRMVSCSDPRAVELIYGFHTEFSKSDMVKAMAPIYKGKKQPTMFAAADNKTHARIRKPVAGAYAMTSIMQRMDELFIRPKRACDIHNWVQYFAFDMVLEMTMSRNLGFMKAGGDVDGVLKQLQKDLDYRGIALAMPIIDRIWRLNPVSKFFKPKQSGHFAMRCKRILEDRMAYEKSLDSRTQQQQDQKPHDFAHRFLEAQRKDPSISDGQLIGYMQANLIAGSDTTAVVMRTAIYYTLKQPWILQRLVTELDQYHGPLPVPFRIARFEMPFCGAIVREALRRHFAFIGMMERQTPPCGVVMPDGRRLPGGVVIGMHGDLIGRDRAIFGEDADEFNPLRWLARPGEPEAKYQERLRAMNAHDLAFGHGPRGCIGKHVAEMEIYKFIPTFFALIQPRFMRPEQSWTVRQLFVFKQSGMDMMLDWRQGKGLQSMA.

A helical membrane pass occupies residues 16-36; it reads ALSLLHYVLGAIFLLLLFHML. Residue asparagine 137 is glycosylated (N-linked (GlcNAc...) asparagine). Cysteine 459 lines the heme pocket.

The protein belongs to the cytochrome P450 family. It depends on heme as a cofactor.

The protein localises to the membrane. It functions in the pathway secondary metabolite biosynthesis; terpenoid biosynthesis. In terms of biological role, cytochrome P450 monooxygenase; part of the gene cluster that mediates the biosynthesis of viridicatumtoxin, a tetracycline-like fungal meroterpenoid with a unique, fused spirobicyclic ring system. The first step of the pathway is the production of the malonamoyl-CoA starter unit for the polyketide synthase vrtA. The aldolase vrtJ may be involved in the synthesis of the malonamate substrate for malonamoyl-CoA synthetase vrtB. The polyketide synthase vrtA then may utilize the malonamoyl-CoA starter unit, followed by sequential condensation of eight malonyl-CoA units to form the polyketide backbone. The cyclization of the last ring could be mediated by the lactamase-like protein vrtG. The proposed post-PKS tailoring steps are a hydroxylation at C5 catalyzed the cytochrome P450 monooxygenase vrtE, a hydroxylation at C12a catalyzed by VrtH and/or VrtI, and an O-methylation by the O-methyltransferase vrtF. VrtC is then proposed to catalyze the transfer of a geranyl group synthesized by vrtD to the aromatic C ring of the tetracyclic polyketide intermediate of viridicatumtoxin to yield previridicatumtoxin. Finally, the cytochrome P450 monooxygenase vrtK catalyzes the spirocyclization of the geranyl moiety of previridicatumtoxin to afford viridicatumtoxin. In Penicillium aethiopicum, this protein is Cytochrome P450 monooxygenase vrtE.